A 594-amino-acid chain; its full sequence is Alanine--tRNA ligase (594 aa).

Zn(2+) is bound by residues histidine 456, histidine 460, cysteine 558, and histidine 562.

The protein belongs to the class-II aminoacyl-tRNA synthetase family. Zn(2+) is required as a cofactor.

The protein resides in the cytoplasm. It catalyses the reaction tRNA(Ala) + L-alanine + ATP = L-alanyl-tRNA(Ala) + AMP + diphosphate. Catalyzes the attachment of alanine to tRNA(Ala) in a two-step reaction: alanine is first activated by ATP to form Ala-AMP and then transferred to the acceptor end of tRNA(Ala). Also edits incorrectly charged Ser-tRNA(Ala) and Gly-tRNA(Ala) via its editing domain. The chain is Alanine--tRNA ligase (alaS) from Borrelia garinii subsp. bavariensis (strain ATCC BAA-2496 / DSM 23469 / PBi) (Borreliella bavariensis).